The primary structure comprises 139 residues: Acyl carrier protein 4, chloroplastic (139 aa).

Residues 1 to 55 (MASAAAGASICIKSASCSPLAPGRISSLRSVSLPVSRKSFPSLRSSKGSFARVSC) constitute a chloroplast transit peptide. In terms of domain architecture, Carrier spans 59-134 (PETVAKVCRI…DAADLIEKLM (76 aa)). Serine 94 carries the post-translational modification O-(pantetheine 4'-phosphoryl)serine.

Belongs to the acyl carrier protein (ACP) family. 4'-phosphopantetheine is transferred from CoA to a specific serine of apo-ACP by acpS. This modification is essential for activity because fatty acids are bound in thioester linkage to the sulfhydryl of the prosthetic group.

It is found in the plastid. It localises to the chloroplast. It functions in the pathway lipid metabolism; fatty acid biosynthesis. Its function is as follows. Carrier of the growing fatty acid chain in fatty acid biosynthesis. The chain is Acyl carrier protein 4, chloroplastic (ACL1) from Cuphea lanceolata (Cigar flower).